We begin with the raw amino-acid sequence, 266 residues long: MSLISADNIVKIYQSHSLVGASARKTMLHDISISIGQGETVALLGRSGCGKSTLARLLVGLERPTSGEVRFRGVPLTKLDRSGMKAFRREVQLIFQDSPGAVNARSSVRAIIGEPLRHLTSLDETRREERIQELLRLVELPPEIADRLPAQVSGGQLQRICIARALAVNPKLIILDEAVSNLDIHLQASALALLTKLQQEGGIAYLFVTHDLRLVQKFAARCLVMDEGQIVEEIKTADLDSMRHPASRLLREAVLPPLPVRAVETN.

Residues 4–252 (ISADNIVKIY…RHPASRLLRE (249 aa)) form the ABC transporter domain. 45–52 (GRSGCGKS) contributes to the ATP binding site.

The protein belongs to the ABC transporter superfamily. Nickel importer (TC 3.A.1.5.3) family. The complex is composed of two ATP-binding proteins (NikD and NikE), two transmembrane proteins (NikB and NikC) and a solute-binding protein (NikA).

It localises to the cell inner membrane. It catalyses the reaction Ni(2+)(out) + ATP + H2O = Ni(2+)(in) + ADP + phosphate + H(+). Its function is as follows. Part of the ABC transporter complex NikABCDE involved in nickel import. Responsible for energy coupling to the transport system. The polypeptide is Nickel import ATP-binding protein NikE (Brucella abortus (strain 2308)).